Here is a 430-residue protein sequence, read N- to C-terminus: Glutamate-1-semialdehyde 2,1-aminomutase (430 aa).

The residue at position 269 (Lys-269) is an N6-(pyridoxal phosphate)lysine.

The protein belongs to the class-III pyridoxal-phosphate-dependent aminotransferase family. HemL subfamily. In terms of assembly, homodimer. It depends on pyridoxal 5'-phosphate as a cofactor.

The protein localises to the cytoplasm. It carries out the reaction (S)-4-amino-5-oxopentanoate = 5-aminolevulinate. The protein operates within porphyrin-containing compound metabolism; protoporphyrin-IX biosynthesis; 5-aminolevulinate from L-glutamyl-tRNA(Glu): step 2/2. This chain is Glutamate-1-semialdehyde 2,1-aminomutase, found in Desulfitobacterium hafniense (strain DSM 10664 / DCB-2).